A 236-amino-acid polypeptide reads, in one-letter code: Biosynthetic peptidoglycan transglycosylase (236 aa).

Residues 12–31 (ALLWFVAGSIVLVLVFRWVP) traverse the membrane as a helical segment.

Belongs to the glycosyltransferase 51 family.

The protein resides in the cell inner membrane. The enzyme catalyses [GlcNAc-(1-&gt;4)-Mur2Ac(oyl-L-Ala-gamma-D-Glu-L-Lys-D-Ala-D-Ala)](n)-di-trans,octa-cis-undecaprenyl diphosphate + beta-D-GlcNAc-(1-&gt;4)-Mur2Ac(oyl-L-Ala-gamma-D-Glu-L-Lys-D-Ala-D-Ala)-di-trans,octa-cis-undecaprenyl diphosphate = [GlcNAc-(1-&gt;4)-Mur2Ac(oyl-L-Ala-gamma-D-Glu-L-Lys-D-Ala-D-Ala)](n+1)-di-trans,octa-cis-undecaprenyl diphosphate + di-trans,octa-cis-undecaprenyl diphosphate + H(+). It participates in cell wall biogenesis; peptidoglycan biosynthesis. Functionally, peptidoglycan polymerase that catalyzes glycan chain elongation from lipid-linked precursors. The sequence is that of Biosynthetic peptidoglycan transglycosylase from Pseudomonas putida (strain ATCC 700007 / DSM 6899 / JCM 31910 / BCRC 17059 / LMG 24140 / F1).